A 142-amino-acid polypeptide reads, in one-letter code: Inner membrane protein YqaA (142 aa).

Residues 1–2 (MS) lie on the Cytoplasmic side of the membrane. A helical transmembrane segment spans residues 3–23 (EALSLFSLFASSFLSATLLPG). Residues 24-26 (NSE) lie on the Periplasmic side of the membrane. A helical transmembrane segment spans residues 27-47 (VVLVAMLLSGISHPWVLVLTA). The Cytoplasmic segment spans residues 48–86 (TMGNSLGGLTNVILGRFFPLRKTSRWQEKATGWLKRYGA). Residues 87–107 (VTLLLSWMPVVGDLLCLLAGW) traverse the membrane as a helical segment. The Periplasmic segment spans residues 108 to 142 (MRISWGPVIFFLCLGKALRYVAVAAATVQGMMWWH).

This sequence to H.influenzae HI_0489.

It localises to the cell inner membrane. The sequence is that of Inner membrane protein YqaA (yqaA) from Escherichia coli (strain K12).